Reading from the N-terminus, the 409-residue chain is Tryptophan synthase beta chain (409 aa).

Lysine 98 is modified (N6-(pyridoxal phosphate)lysine).

The protein belongs to the TrpB family. In terms of assembly, tetramer of two alpha and two beta chains. It depends on pyridoxal 5'-phosphate as a cofactor.

It carries out the reaction (1S,2R)-1-C-(indol-3-yl)glycerol 3-phosphate + L-serine = D-glyceraldehyde 3-phosphate + L-tryptophan + H2O. It functions in the pathway amino-acid biosynthesis; L-tryptophan biosynthesis; L-tryptophan from chorismate: step 5/5. Functionally, the beta subunit is responsible for the synthesis of L-tryptophan from indole and L-serine. This chain is Tryptophan synthase beta chain, found in Jannaschia sp. (strain CCS1).